The primary structure comprises 705 residues: Ribonuclease R (705 aa).

Positions 240 to 567 (RRDLREQLCF…VHRLLKKALR (328 aa)) constitute an RNB domain. In terms of domain architecture, S1 motif spans 615–696 (GEEFIGIITG…ERARVEFELI (82 aa)).

Belongs to the RNR ribonuclease family. RNase R subfamily.

The protein resides in the cytoplasm. It carries out the reaction Exonucleolytic cleavage in the 3'- to 5'-direction to yield nucleoside 5'-phosphates.. In terms of biological role, 3'-5' exoribonuclease that releases 5'-nucleoside monophosphates and is involved in maturation of structured RNAs. The sequence is that of Ribonuclease R from Aquifex aeolicus (strain VF5).